A 66-amino-acid polypeptide reads, in one-letter code: uncharacterized protein (66 aa).

Positions 1–20 are hydrophobic; that stretch reads MIALAYLATVAIAAMVLAVA.

This is an uncharacterized protein from Streptomyces lividans.